Reading from the N-terminus, the 197-residue chain is Holliday junction branch migration complex subunit RuvA (197 aa).

The segment at 1-64 (MYEYIKGKYI…EDFIGVYGFL (64 aa)) is domain I. Residues 65–144 (TKDELSMFKL…DILEEDDEQI (80 aa)) form a domain II region. The interval 145 to 149 (INKVT) is flexible linker. The domain III stretch occupies residues 149-197 (TDDKKVLEAVAALVTLGYSEKEANKVINSCDKNNSLEQIIKEALKYLMK).

This sequence belongs to the RuvA family. As to quaternary structure, homotetramer. Forms an RuvA(8)-RuvB(12)-Holliday junction (HJ) complex. HJ DNA is sandwiched between 2 RuvA tetramers; dsDNA enters through RuvA and exits via RuvB. An RuvB hexamer assembles on each DNA strand where it exits the tetramer. Each RuvB hexamer is contacted by two RuvA subunits (via domain III) on 2 adjacent RuvB subunits; this complex drives branch migration. In the full resolvosome a probable DNA-RuvA(4)-RuvB(12)-RuvC(2) complex forms which resolves the HJ.

Its subcellular location is the cytoplasm. Functionally, the RuvA-RuvB-RuvC complex processes Holliday junction (HJ) DNA during genetic recombination and DNA repair, while the RuvA-RuvB complex plays an important role in the rescue of blocked DNA replication forks via replication fork reversal (RFR). RuvA specifically binds to HJ cruciform DNA, conferring on it an open structure. The RuvB hexamer acts as an ATP-dependent pump, pulling dsDNA into and through the RuvAB complex. HJ branch migration allows RuvC to scan DNA until it finds its consensus sequence, where it cleaves and resolves the cruciform DNA. This is Holliday junction branch migration complex subunit RuvA from Clostridium botulinum (strain Kyoto / Type A2).